We begin with the raw amino-acid sequence, 561 residues long: Shugoshin 1 (561 aa).

Residues 1–176 form a necessary for interaction with PPP2CA and PPP2R1A region; the sequence is MAKERCLKKS…DTLGVDFDSG (176 aa). A coiled-coil region spans residues 7–89; that stretch reads LKKSFQDSLE…DIILQLRKEC (83 aa). S14 is subject to Phosphoserine; by NEK2. A D-box 1 motif is present at residues 192–200; it reads RSSLKKHCN. A Phosphoserine modification is found at S256. Disordered regions lie at residues 260-331 and 348-441; these read IQPG…SVSS and FRQK…HLSL. Basic and acidic residues predominate over residues 267-296; sequence KTKEDILESKSEQTKSKQRDTQERKREEKR. Positions 273–313 form a coiled coil; the sequence is LESKSEQTKSKQRDTQERKREEKRKANRRKSKRMSKYKENK. A compositionally biased stretch (basic residues) spans 297-307; it reads KANRRKSKRMS. Over residues 308 to 318 the composition is skewed to basic and acidic residues; the sequence is KYKENKSENKK. The KEN box signature appears at 310-312; sequence KEN. The span at 364–375 shows a compositional bias: low complexity; the sequence is SEVSLCESSGSG. Residues 388 to 398 show a composition bias toward polar residues; that stretch reads YIQNPTSNSDR. Residues 410 to 421 are compositionally biased toward basic and acidic residues; the sequence is KYTDEKETEGSK. The span at 422–433 shows a compositional bias: low complexity; it reads PTKTPTTTPPET. At S436 the chain carries Phosphoserine. Residues 438-446 carry the D-box 2 motif; it reads HLSLKDITN. The PXVXL/I motif motif lies at 451-455; that stretch reads PVVKI. The short motif at 457-465 is the D-box 3 element; sequence RLSLSPKKN. At S507 the chain carries Phosphoserine; by NEK2.

The protein belongs to the shugoshin family. As to quaternary structure, interacts with PPP2CA (or PPP2CB), PPP2R1B, PPP2R5A, PPP2R5B, PPP2R5C, PPP2R5D, PPP2R5E, SET, LRRC59, RBM10 (or RBM5), RPL10A, RPL28, RPL7, RPL7A and RPLP1. Interaction with protein phosphatase 2A occurs most probably through direct binding to the regulatory B56 subunits: PPP2R1B, PPP2R5A, PPP2R5B, PPP2R5C, PPP2R5D, PPP2R5E. Interacts with PPP2R1A and NEK2. Isoform 3 interacts with PLK1. Interacts with CDCA8. In terms of processing, ubiquitinated and degraded during mitotic exit by APC/C-Cdh1. Post-translationally, phosphorylation by NEK2 is essential for chromosome congression in mitosis and for the proper attachment of spindle microtubule to the kinetochore. Phosphorylated by PLK1 and AUKRB. In terms of tissue distribution, widely expressed. Highly expressed in testis. Expressed in lung, small intestine, breast, liver and placenta. Strongly overexpressed in 90% of breast cancers tested.

The protein resides in the nucleus. It is found in the chromosome. It localises to the centromere. Its subcellular location is the kinetochore. The protein localises to the cytoplasm. The protein resides in the cytoskeleton. It is found in the spindle pole. It localises to the microtubule organizing center. Its subcellular location is the centrosome. The protein localises to the nucleus speckle. Functionally, plays a central role in chromosome cohesion during mitosis by preventing premature dissociation of cohesin complex from centromeres after prophase, when most of cohesin complex dissociates from chromosomes arms. May act by preventing phosphorylation of the STAG2 subunit of cohesin complex at the centromere, ensuring cohesin persistence at centromere until cohesin cleavage by ESPL1/separase at anaphase. Essential for proper chromosome segregation during mitosis and this function requires interaction with PPP2R1A. Its phosphorylated form is necessary for chromosome congression and for the proper attachment of spindle microtubule to the kinetochore. Necessary for kinetochore localization of PLK1 and CENPF. May play a role in the tension sensing mechanism of the spindle-assembly checkpoint by regulating PLK1 kinetochore affinity. Isoform 3 plays a role in maintaining centriole cohesion involved in controlling spindle pole integrity. Involved in centromeric enrichment of AUKRB in prometaphase. This chain is Shugoshin 1, found in Homo sapiens (Human).